A 726-amino-acid chain; its full sequence is Phenylalanine--tRNA ligase beta subunit (726 aa).

Residues 38-150 (FSSSKGLLFA…NFASLNDDAS (113 aa)) form the tRNA-binding domain. The B5 domain maps to 394–467 (DKKVEINFDE…RFYNYDNFKE (74 aa)). The Mg(2+) site is built by D445, D451, E454, and E455.

It belongs to the phenylalanyl-tRNA synthetase beta subunit family. Type 1 subfamily. Tetramer of two alpha and two beta subunits. Mg(2+) serves as cofactor.

It localises to the cytoplasm. It carries out the reaction tRNA(Phe) + L-phenylalanine + ATP = L-phenylalanyl-tRNA(Phe) + AMP + diphosphate + H(+). The polypeptide is Phenylalanine--tRNA ligase beta subunit (Mycoplasmopsis synoviae (strain 53) (Mycoplasma synoviae)).